We begin with the raw amino-acid sequence, 110 residues long: Nucleoid-associated protein PERMA_0533 (110 aa).

Belongs to the YbaB/EbfC family. In terms of assembly, homodimer.

It localises to the cytoplasm. It is found in the nucleoid. In terms of biological role, binds to DNA and alters its conformation. May be involved in regulation of gene expression, nucleoid organization and DNA protection. This chain is Nucleoid-associated protein PERMA_0533, found in Persephonella marina (strain DSM 14350 / EX-H1).